We begin with the raw amino-acid sequence, 579 residues long: Plastidial pyruvate kinase 2 (579 aa).

The N-terminal 63 residues, 1–63 (MAQVVATRSI…SRRVVDTTVR (63 aa)), are a transit peptide targeting the chloroplast. The segment covering 6–24 (ATRSIQGSMLSPNGGSVST) has biased composition (polar residues). The tract at residues 6–26 (ATRSIQGSMLSPNGGSVSTRS) is disordered. Substrate is bound at residue R140. K(+)-binding residues include N142, S144, D175, and T176. Residue 142 to 145 (NMSH) coordinates ATP. R182 is an ATP binding site. K325 contributes to the substrate binding site. Residue E327 coordinates Mg(2+). G350, D351, and T383 together coordinate substrate. Position 351 (D351) interacts with Mg(2+).

It belongs to the pyruvate kinase family. Oligomer of alpha and beta subunits. The cofactor is Mg(2+). It depends on K(+) as a cofactor. Mostly expressed in seeds, and, to a lower extent, in roots, leaves (veins and trichomes), inflorescences, siliques, pollen (grains and tubes) and flowers (sepals and petals).

It is found in the plastid. It localises to the chloroplast stroma. Its subcellular location is the mitochondrion. It catalyses the reaction pyruvate + ATP = phosphoenolpyruvate + ADP + H(+). It functions in the pathway carbohydrate degradation; glycolysis; pyruvate from D-glyceraldehyde 3-phosphate: step 5/5. Functionally, required for plastidial pyruvate kinase activity. Involved in seed oil accumulation, embryo development and seed storage compounds mobilization upon germination. This Arabidopsis thaliana (Mouse-ear cress) protein is Plastidial pyruvate kinase 2 (PKP2).